We begin with the raw amino-acid sequence, 393 residues long: Phosphoglycerate kinase (393 aa).

Substrate-binding positions include 22–24 (DFN), arginine 37, 60–63 (HLGR), arginine 119, and arginine 152. Residues lysine 202, glycine 293, glutamate 324, and 350-353 (GGDS) contribute to the ATP site.

It belongs to the phosphoglycerate kinase family. In terms of assembly, monomer.

Its subcellular location is the cytoplasm. The enzyme catalyses (2R)-3-phosphoglycerate + ATP = (2R)-3-phospho-glyceroyl phosphate + ADP. Its pathway is carbohydrate degradation; glycolysis; pyruvate from D-glyceraldehyde 3-phosphate: step 2/5. The protein is Phosphoglycerate kinase (pgk) of Borreliella burgdorferi (strain ATCC 35210 / DSM 4680 / CIP 102532 / B31) (Borrelia burgdorferi).